Reading from the N-terminus, the 208-residue chain is Protein GrpE (208 aa).

The segment covering Met-1–Thr-12 has biased composition (basic and acidic residues). The segment at Met-1–Asn-51 is disordered. A compositionally biased stretch (polar residues) spans Glu-13 to Gln-23. The span at Glu-42–Asn-51 shows a compositional bias: acidic residues.

The protein belongs to the GrpE family. In terms of assembly, homodimer.

The protein localises to the cytoplasm. In terms of biological role, participates actively in the response to hyperosmotic and heat shock by preventing the aggregation of stress-denatured proteins, in association with DnaK and GrpE. It is the nucleotide exchange factor for DnaK and may function as a thermosensor. Unfolded proteins bind initially to DnaJ; upon interaction with the DnaJ-bound protein, DnaK hydrolyzes its bound ATP, resulting in the formation of a stable complex. GrpE releases ADP from DnaK; ATP binding to DnaK triggers the release of the substrate protein, thus completing the reaction cycle. Several rounds of ATP-dependent interactions between DnaJ, DnaK and GrpE are required for fully efficient folding. This Staphylococcus aureus (strain COL) protein is Protein GrpE.